Consider the following 312-residue polypeptide: Chitin deacetylase 2 (312 aa).

The signal sequence occupies residues 1–44; it reads MRIQLNTIDLQCIIALSCLGQFVHAEANREDLKQIDFQFPVLER. Cysteines 117 and 300 form a disulfide. Positions 118-307 constitute a NodB homology domain; sequence SKLSQTFDDG…SHCVGGIDYI (190 aa). Asp125 serves as the catalytic Proton acceptor. Asp125 provides a ligand contact to acetate. Position 126 (Asp126) interacts with Co(2+). N-linked (GlcNAc...) asparagine glycosylation occurs at Asn142. 2 residues coordinate Co(2+): His172 and His176. N-linked (GlcNAc...) asparagine glycans are attached at residues Asn181 and Asn199. Tyr213 provides a ligand contact to acetate. N-linked (GlcNAc...) asparagine glycans are attached at residues Asn246 and Asn263. His273 acts as the Proton donor in catalysis.

This sequence belongs to the polysaccharide deacetylase family. Monomer. Co(2+) serves as cofactor. N-glycosylated.

The protein resides in the prospore. The enzyme catalyses [(1-&gt;4)-N-acetyl-beta-D-glucosaminyl](n) + n H2O = chitosan + n acetate. Its function is as follows. Hydrolyzes the N-acetamido groups of N-acetyl-D-glucosamine residues in chitin to form chitosan and acetate. Chitosan is a component of the spore wall. This is Chitin deacetylase 2 from Saccharomyces cerevisiae (strain ATCC 204508 / S288c) (Baker's yeast).